A 573-amino-acid polypeptide reads, in one-letter code: 3-oxosteroid 1-dehydrogenase (573 aa).

7–36 (DLIVVGSGAGACWAPIRAQEQGLKTLVVEK) contacts FAD.

It belongs to the FAD-dependent oxidoreductase 2 family. 3-oxosteroid dehydrogenase subfamily. It depends on FAD as a cofactor.

Its subcellular location is the cell inner membrane. The enzyme catalyses a 3-oxosteroid + A = a 3-oxo-Delta(1)-steroid + AH2. Its pathway is lipid metabolism; steroid degradation. In terms of biological role, dehydrogenates steroids by introducing a double bond in steroid ring A. In Comamonas testosteroni (Pseudomonas testosteroni), this protein is 3-oxosteroid 1-dehydrogenase.